Here is a 213-residue protein sequence, read N- to C-terminus: FMN-dependent NADH:quinone oxidoreductase (213 aa).

This sequence belongs to the azoreductase type 1 family. Homodimer. FMN serves as cofactor.

It carries out the reaction 2 a quinone + NADH + H(+) = 2 a 1,4-benzosemiquinone + NAD(+). The catalysed reaction is N,N-dimethyl-1,4-phenylenediamine + anthranilate + 2 NAD(+) = 2-(4-dimethylaminophenyl)diazenylbenzoate + 2 NADH + 2 H(+). Quinone reductase that provides resistance to thiol-specific stress caused by electrophilic quinones. In terms of biological role, also exhibits azoreductase activity. Catalyzes the reductive cleavage of the azo bond in aromatic azo compounds to the corresponding amines. This Streptococcus agalactiae serotype III (strain NEM316) protein is FMN-dependent NADH:quinone oxidoreductase.